We begin with the raw amino-acid sequence, 274 residues long: NAD(P)H-quinone oxidoreductase subunit K, chloroplastic (274 aa).

2 stretches are compositionally biased toward polar residues: residues 1–10 (MVINQKNLSS) and 18–27 (SGSQSSTKAD). The segment at 1–27 (MVINQKNLSSPVAPYDKSGSQSSTKAD) is disordered. The [4Fe-4S] cluster site is built by Cys90, Cys91, Cys155, and Cys186.

Belongs to the complex I 20 kDa subunit family. In terms of assembly, NDH is composed of at least 16 different subunits, 5 of which are encoded in the nucleus. [4Fe-4S] cluster is required as a cofactor.

The protein resides in the plastid. Its subcellular location is the chloroplast thylakoid membrane. It catalyses the reaction a plastoquinone + NADH + (n+1) H(+)(in) = a plastoquinol + NAD(+) + n H(+)(out). It carries out the reaction a plastoquinone + NADPH + (n+1) H(+)(in) = a plastoquinol + NADP(+) + n H(+)(out). In terms of biological role, NDH shuttles electrons from NAD(P)H:plastoquinone, via FMN and iron-sulfur (Fe-S) centers, to quinones in the photosynthetic chain and possibly in a chloroplast respiratory chain. The immediate electron acceptor for the enzyme in this species is believed to be plastoquinone. Couples the redox reaction to proton translocation, and thus conserves the redox energy in a proton gradient. This chain is NAD(P)H-quinone oxidoreductase subunit K, chloroplastic, found in Chlorokybus atmophyticus (Soil alga).